A 188-amino-acid chain; its full sequence is ADP-ribosylation factor K (188 aa).

Residues 34 to 40, 75 to 79, and 134 to 137 each bind GTP; these read DGAGKST, DVGGQ, and NKQD.

This sequence belongs to the small GTPase superfamily. Arf family.

It localises to the golgi apparatus. In terms of biological role, GTP-binding protein that may be involved in protein trafficking. May modulate vesicle budding and uncoating within the Golgi apparatus. The chain is ADP-ribosylation factor K (arrK) from Dictyostelium discoideum (Social amoeba).